The chain runs to 259 residues: Leucyl/phenylalanyl-tRNA--protein transferase (259 aa).

Belongs to the L/F-transferase family.

The protein resides in the cytoplasm. It carries out the reaction N-terminal L-lysyl-[protein] + L-leucyl-tRNA(Leu) = N-terminal L-leucyl-L-lysyl-[protein] + tRNA(Leu) + H(+). It catalyses the reaction N-terminal L-arginyl-[protein] + L-leucyl-tRNA(Leu) = N-terminal L-leucyl-L-arginyl-[protein] + tRNA(Leu) + H(+). The enzyme catalyses L-phenylalanyl-tRNA(Phe) + an N-terminal L-alpha-aminoacyl-[protein] = an N-terminal L-phenylalanyl-L-alpha-aminoacyl-[protein] + tRNA(Phe). In terms of biological role, functions in the N-end rule pathway of protein degradation where it conjugates Leu, Phe and, less efficiently, Met from aminoacyl-tRNAs to the N-termini of proteins containing an N-terminal arginine or lysine. The sequence is that of Leucyl/phenylalanyl-tRNA--protein transferase from Teredinibacter turnerae (strain ATCC 39867 / T7901).